The primary structure comprises 522 residues: GMP synthase [glutamine-hydrolyzing] (522 aa).

Residues 9–204 (KILILDFGAQ…VVDICGCQTL (196 aa)) enclose the Glutamine amidotransferase type-1 domain. Residue cysteine 86 is the Nucleophile of the active site. Active-site residues include histidine 178 and glutamate 180. The GMPS ATP-PPase domain maps to 205–397 (WTSANIIEDQ…LGLPHAMVYR (193 aa)). 232-238 (SGGVDSS) contacts ATP.

In terms of assembly, homodimer.

The enzyme catalyses XMP + L-glutamine + ATP + H2O = GMP + L-glutamate + AMP + diphosphate + 2 H(+). Its pathway is purine metabolism; GMP biosynthesis; GMP from XMP (L-Gln route): step 1/1. Its function is as follows. Catalyzes the synthesis of GMP from XMP. In Xylella fastidiosa (strain M23), this protein is GMP synthase [glutamine-hydrolyzing].